Reading from the N-terminus, the 393-residue chain is Methylthioribose kinase (393 aa).

ATP-binding positions include asparagine 38, lysine 53, and 107-109 (EDL). Aspartate 225 lines the substrate pocket. Residue 242 to 244 (DPE) participates in ATP binding. Arginine 332 is a substrate binding site.

This sequence belongs to the methylthioribose kinase family. In terms of assembly, homodimer.

The enzyme catalyses 5-(methylsulfanyl)-D-ribose + ATP = 5-(methylsulfanyl)-alpha-D-ribose 1-phosphate + ADP + H(+). It functions in the pathway amino-acid biosynthesis; L-methionine biosynthesis via salvage pathway; S-methyl-5-thio-alpha-D-ribose 1-phosphate from S-methyl-5'-thioadenosine (hydrolase route): step 2/2. In terms of biological role, catalyzes the phosphorylation of methylthioribose into methylthioribose-1-phosphate. The sequence is that of Methylthioribose kinase from Bacillus cereus (strain ATCC 10987 / NRS 248).